The following is a 602-amino-acid chain: Sodium- and chloride-dependent GABA transporter 2 (602 aa).

Polar residues predominate over residues 1–13 (MDSRVSGTTSNGE). Residues 1–22 (MDSRVSGTTSNGETKPVYPVME) are disordered. At 1-40 (MDSRVSGTTSNGETKPVYPVMEKKEEDGTLERGHWNNKME) the chain is on the cytoplasmic side. 3 consecutive transmembrane segments (helical) span residues 41-61 (FVLSVAGEIIGLGNVWRFPYL), 68-88 (GAFFIPYLVFLFTCGIPVFLL), and 121-141 (IVILLNVYYIIVLAWALFYLF). Residues 142–206 (SSFTIDLPWG…GIQHLGALRW (65 aa)) are Extracellular-facing. A disulfide bond links C153 and C162. N-linked (GlcNAc...) asparagine glycosylation occurs at N173. The next 2 membrane-spanning stretches (helical) occupy residues 207 to 227 (ELALCLLLAWVICYFCIWKGV) and 233 to 253 (VVYFTATFPYLMLVVLLIRGV). A glycan (N-linked (GlcNAc...) asparagine) is linked at N269. Transmembrane regions (helical) follow at residues 282–302 (AGTQIFFSFAICLGCLTALGS), 319–339 (FLNSGTSFVAGFAIFSILGFM), 366–386 (VVMLPFSPLWACCFFFMVVLL), 418–438 (VLILGVSVVSFLVGLIMLTEG), 453–473 (GMCLLFVAIFESLCVAWVYGA), 490–510 (PLIKYCWLFLTPAVCTATFLF), and 528–548 (WWGDALGWLLALSSMVCIPAW). The Cytoplasmic portion of the chain corresponds to 549 to 602 (SLYRLGTLKGPFRERIRQLMCPAEDLPQRNPAGPSAPATPRTSLLRLTELESHC). T587 bears the Phosphothreonine mark. At S591 the chain carries Phosphoserine.

This sequence belongs to the sodium:neurotransmitter symporter (SNF) (TC 2.A.22) family. SLC6A13 subfamily. As to expression, expressed in brain, kidney, lung, liver and testis.

The protein localises to the cell membrane. It localises to the basolateral cell membrane. It carries out the reaction 4-aminobutanoate(out) + chloride(out) + 2 Na(+)(out) = 4-aminobutanoate(in) + chloride(in) + 2 Na(+)(in). The enzyme catalyses taurine(out) + chloride(out) + 2 Na(+)(out) = taurine(in) + chloride(in) + 2 Na(+)(in). It catalyses the reaction beta-alanine(out) + chloride(out) + 2 Na(+)(out) = beta-alanine(in) + chloride(in) + 2 Na(+)(in). The catalysed reaction is hypotaurine(out) + chloride(out) + 2 Na(+)(out) = hypotaurine(in) + chloride(in) + 2 Na(+)(in). With respect to regulation, GABA transport is inhibited by beta-alanine, 2,3-diaminopropionic acid and SNAP-5114. In terms of biological role, mediates sodium- and chloride-dependent transport of gamma-aminobutyric acid (GABA). Mediates transport of beta-alanine. Can also mediate transport of taurine and hypotaurine. This is Sodium- and chloride-dependent GABA transporter 2 (SLC6A13) from Homo sapiens (Human).